A 399-amino-acid polypeptide reads, in one-letter code: Elongation factor Tu (399 aa).

One can recognise a tr-type G domain in the interval 10–204 (KPHVNIGTIG…AVDASIPEPE (195 aa)). A G1 region spans residues 19–26 (GHVDHGKT). GTP is bound at residue 19–26 (GHVDHGKT). Thr26 serves as a coordination point for Mg(2+). Positions 60-64 (GITIN) are G2. Residues 81–84 (DCPG) form a G3 region. Residues 81–85 (DCPGH) and 136–139 (NKCD) contribute to the GTP site. The segment at 136–139 (NKCD) is G4. The segment at 174-176 (SGL) is G5.

The protein belongs to the TRAFAC class translation factor GTPase superfamily. Classic translation factor GTPase family. EF-Tu/EF-1A subfamily. As to quaternary structure, monomer.

It is found in the cytoplasm. It catalyses the reaction GTP + H2O = GDP + phosphate + H(+). In terms of biological role, GTP hydrolase that promotes the GTP-dependent binding of aminoacyl-tRNA to the A-site of ribosomes during protein biosynthesis. This Prochlorococcus marinus (strain NATL1A) protein is Elongation factor Tu.